Consider the following 683-residue polypeptide: DNA polymerase alpha-associated DNA helicase A (683 aa).

Residue 229 to 236 (GPPGTGKT) participates in ATP binding.

This sequence belongs to the DNA2/NAM7 helicase family. In terms of assembly, associates with the hexameric DNA polymerase alpha.

The protein localises to the cytoplasm. It localises to the nucleus. It catalyses the reaction ATP + H2O = ADP + phosphate + H(+). Its function is as follows. DNA polymerase alpha-associated DNA helicase which may be involved in DNA replication. This chain is DNA polymerase alpha-associated DNA helicase A (HCS1), found in Saccharomyces cerevisiae (strain ATCC 204508 / S288c) (Baker's yeast).